A 280-amino-acid chain; its full sequence is Pantothenate synthetase (280 aa).

Residue 30–37 coordinates ATP; the sequence is MGALHEGH. His37 functions as the Proton donor in the catalytic mechanism. Gln61 is a binding site for (R)-pantoate. Gln61 is a binding site for beta-alanine. Position 147 to 150 (147 to 150) interacts with ATP; that stretch reads GQKD. Residue Gln153 participates in (R)-pantoate binding. ATP contacts are provided by residues Val176 and 184–187; that span reads MSSR.

It belongs to the pantothenate synthetase family. Homodimer.

It is found in the cytoplasm. It carries out the reaction (R)-pantoate + beta-alanine + ATP = (R)-pantothenate + AMP + diphosphate + H(+). It functions in the pathway cofactor biosynthesis; (R)-pantothenate biosynthesis; (R)-pantothenate from (R)-pantoate and beta-alanine: step 1/1. Its function is as follows. Catalyzes the condensation of pantoate with beta-alanine in an ATP-dependent reaction via a pantoyl-adenylate intermediate. The chain is Pantothenate synthetase from Thermodesulfovibrio yellowstonii (strain ATCC 51303 / DSM 11347 / YP87).